The sequence spans 290 residues: Potassium-transporting ATPase subunit beta (290 aa).

The Cytoplasmic segment spans residues Met-1–Arg-36. Residues Trp-37–Leu-57 traverse the membrane as a helical; Signal-anchor for type II membrane protein segment. Topologically, residues Cys-58 to Gln-290 are extracellular. Residues Asn-99, Asn-103, Asn-130, Asn-146, and Asn-161 are each glycosylated (N-linked (GlcNAc...) asparagine). Cys-131 and Cys-152 are disulfide-bonded. A disulfide bridge connects residues Cys-162 and Cys-178. N-linked (GlcNAc...) asparagine glycosylation is found at Asn-193 and Asn-221. The immunoglobulin-like stretch occupies residues Ser-194–Gln-290. A disulfide bond links Cys-201 and Cys-262.

It belongs to the X(+)/potassium ATPases subunit beta family. In terms of assembly, the ATPase pump is composed of two subunits: alpha (catalytic) and beta (regulatory). Interacts with alpha subunit ATP12A; this interaction is required for the formation of a functionally active pump and targeting at the plasma membrane. Interacts (via N-terminus) with alpha subunit ATP4A (via the P-domain). Post-translationally, N-glycosylation is necessary for assembly and functional expression of the pump at the plasma membrane.

The protein resides in the apical cell membrane. The protein localises to the cell membrane. Functionally, the beta subunit of the gastric H(+)/K(+) ATPase pump which transports H(+) ions in exchange for K(+) ions across the apical membrane of parietal cells. Plays a structural and regulatory role in the assembly and membrane targeting of a functionally active pump. Within a transport cycle, the transfer of a H(+) ion across the membrane is coupled to ATP hydrolysis and is associated with a transient phosphorylation of the alpha subunit that shifts the pump conformation from inward-facing (E1) to outward-facing state (E2). Interacts with the phosphorylation domain of the alpha subunit and functions as a ratchet, stabilizing the lumenal-open E2 conformation and preventing the reverse reaction of the transport cycle. This Canis lupus familiaris (Dog) protein is Potassium-transporting ATPase subunit beta (ATP4B).